We begin with the raw amino-acid sequence, 117 residues long: Large ribosomal subunit protein bL20 (117 aa).

The protein belongs to the bacterial ribosomal protein bL20 family.

In terms of biological role, binds directly to 23S ribosomal RNA and is necessary for the in vitro assembly process of the 50S ribosomal subunit. It is not involved in the protein synthesizing functions of that subunit. The protein is Large ribosomal subunit protein bL20 of Campylobacter hominis (strain ATCC BAA-381 / DSM 21671 / CCUG 45161 / LMG 19568 / NCTC 13146 / CH001A).